Reading from the N-terminus, the 187-residue chain is NADH-quinone oxidoreductase subunit B (187 aa).

Residues Cys-46, Cys-47, Cys-112, and Cys-141 each coordinate [4Fe-4S] cluster.

Belongs to the complex I 20 kDa subunit family. NDH-1 is composed of 14 different subunits. Subunits NuoB, C, D, E, F, and G constitute the peripheral sector of the complex. [4Fe-4S] cluster serves as cofactor.

The protein localises to the cell inner membrane. It catalyses the reaction a quinone + NADH + 5 H(+)(in) = a quinol + NAD(+) + 4 H(+)(out). Functionally, NDH-1 shuttles electrons from NADH, via FMN and iron-sulfur (Fe-S) centers, to quinones in the respiratory chain. The immediate electron acceptor for the enzyme in this species is believed to be ubiquinone. Couples the redox reaction to proton translocation (for every two electrons transferred, four hydrogen ions are translocated across the cytoplasmic membrane), and thus conserves the redox energy in a proton gradient. The chain is NADH-quinone oxidoreductase subunit B from Myxococcus xanthus (strain DK1622).